Consider the following 695-residue polypeptide: DNA ligase (695 aa).

NAD(+) contacts are provided by residues 39–43, 88–89, and glutamate 124; these read DAEYD and SL. The N6-AMP-lysine intermediate role is filled by lysine 126. Positions 147, 183, 299, and 323 each coordinate NAD(+). Residues cysteine 419, cysteine 422, cysteine 437, and cysteine 443 each contribute to the Zn(2+) site. The BRCT domain maps to 612–695; it reads PAQGHLSGKT…ELAGIGPVGP (84 aa).

It belongs to the NAD-dependent DNA ligase family. LigA subfamily. The cofactor is Mg(2+). Mn(2+) is required as a cofactor.

The enzyme catalyses NAD(+) + (deoxyribonucleotide)n-3'-hydroxyl + 5'-phospho-(deoxyribonucleotide)m = (deoxyribonucleotide)n+m + AMP + beta-nicotinamide D-nucleotide.. In terms of biological role, DNA ligase that catalyzes the formation of phosphodiester linkages between 5'-phosphoryl and 3'-hydroxyl groups in double-stranded DNA using NAD as a coenzyme and as the energy source for the reaction. It is essential for DNA replication and repair of damaged DNA. The polypeptide is DNA ligase (Gluconacetobacter diazotrophicus (strain ATCC 49037 / DSM 5601 / CCUG 37298 / CIP 103539 / LMG 7603 / PAl5)).